We begin with the raw amino-acid sequence, 342 residues long: S-adenosylmethionine:tRNA ribosyltransferase-isomerase (342 aa).

The protein belongs to the QueA family. Monomer.

It localises to the cytoplasm. The enzyme catalyses 7-aminomethyl-7-carbaguanosine(34) in tRNA + S-adenosyl-L-methionine = epoxyqueuosine(34) in tRNA + adenine + L-methionine + 2 H(+). The protein operates within tRNA modification; tRNA-queuosine biosynthesis. In terms of biological role, transfers and isomerizes the ribose moiety from AdoMet to the 7-aminomethyl group of 7-deazaguanine (preQ1-tRNA) to give epoxyqueuosine (oQ-tRNA). In Shouchella clausii (strain KSM-K16) (Alkalihalobacillus clausii), this protein is S-adenosylmethionine:tRNA ribosyltransferase-isomerase.